Here is a 495-residue protein sequence, read N- to C-terminus: Ectonucleoside triphosphate diphosphohydrolase 8 (495 aa).

Residues 1–8 lie on the Cytoplasmic side of the membrane; it reads MGLSRKEQ. A helical transmembrane segment spans residues 9–29; that stretch reads VFLALLGASGVSGLTALILLL. The Extracellular segment spans residues 30-471; it reads VEATSVLLPT…AESYGVWVAK (442 aa). N-linked (GlcNAc...) asparagine glycosylation occurs at Asn67. The cysteines at positions 78 and 102 are disulfide-linked. Catalysis depends on Glu168, which acts as the Proton acceptor. An intrachain disulfide couples Cys246 to Cys292. The N-linked (GlcNAc...) asparagine glycan is linked to Asn304. Cys329 and Cys335 are joined by a disulfide. N-linked (GlcNAc...) asparagine glycosylation is present at Asn363. Cys381 and Cys403 are disulfide-bonded. The helical transmembrane segment at 472–492 threads the bilayer; the sequence is VVFMVLALVAVVGAALVQLFW. Over 493-495 the chain is Cytoplasmic; that stretch reads LQD.

The protein belongs to the GDA1/CD39 NTPase family. The cofactor is Ca(2+). It depends on Mg(2+) as a cofactor. Post-translationally, N-glycosylated.

Its subcellular location is the cell membrane. It catalyses the reaction a ribonucleoside 5'-triphosphate + 2 H2O = a ribonucleoside 5'-phosphate + 2 phosphate + 2 H(+). With respect to regulation, not inhibited by ARL 67156. Canalicular ectonucleoside NTPDase responsible for the main hepatic NTPDase activity. Ectonucleoside NTPDases catalyze the hydrolysis of gamma- and beta-phosphate residues of nucleotides, playing a central role in concentration of extracellular nucleotides. Has activity toward ATP, ADP, UTP and UDP, but not toward AMP. This Homo sapiens (Human) protein is Ectonucleoside triphosphate diphosphohydrolase 8 (ENTPD8).